Reading from the N-terminus, the 171-residue chain is Endoribonuclease YbeY (171 aa).

Zn(2+)-binding residues include histidine 130, histidine 134, and histidine 140.

The protein belongs to the endoribonuclease YbeY family. Requires Zn(2+) as cofactor.

It is found in the cytoplasm. In terms of biological role, single strand-specific metallo-endoribonuclease involved in late-stage 70S ribosome quality control and in maturation of the 3' terminus of the 16S rRNA. The sequence is that of Endoribonuclease YbeY from Neisseria meningitidis serogroup A / serotype 4A (strain DSM 15465 / Z2491).